We begin with the raw amino-acid sequence, 61 residues long: Small ribosomal subunit protein uS14B (61 aa).

The Zn(2+) site is built by C24, C27, C40, and C43.

It belongs to the universal ribosomal protein uS14 family. Zinc-binding uS14 subfamily. In terms of assembly, part of the 30S ribosomal subunit. Contacts proteins S3 and S10. The cofactor is Zn(2+).

Binds 16S rRNA, required for the assembly of 30S particles and may also be responsible for determining the conformation of the 16S rRNA at the A site. The sequence is that of Small ribosomal subunit protein uS14B from Cutibacterium acnes (strain DSM 16379 / KPA171202) (Propionibacterium acnes).